A 689-amino-acid polypeptide reads, in one-letter code: Acyl-coenzyme A oxidase 1 (689 aa).

FAD-binding residues include threonine 149 and glycine 188. Glutamate 444 serves as the catalytic Proton acceptor.

This sequence belongs to the acyl-CoA oxidase family. As to quaternary structure, heteropentamer composed of five different subunits. The cofactor is FAD.

The protein resides in the peroxisome. The catalysed reaction is a 2,3-saturated acyl-CoA + O2 = a (2E)-enoyl-CoA + H2O2. The protein operates within lipid metabolism; peroxisomal fatty acid beta-oxidation. The chain is Acyl-coenzyme A oxidase 1 (POX1) from Yarrowia lipolytica (strain CLIB 122 / E 150) (Yeast).